The sequence spans 547 residues: Apolipoprotein N-acyltransferase (547 aa).

The next 6 membrane-spanning stretches (helical) occupy residues Pro31 to Ala51, Gly65 to His85, Gly89 to Phe109, Ala144 to Leu164, Leu181 to Leu201, and Leu215 to Trp235. A CN hydrolase domain is found at Val248–Gly511. Glu292 acts as the Proton acceptor in catalysis. Lys366 is an active-site residue. The active-site Nucleophile is the Cys416.

This sequence belongs to the CN hydrolase family. Apolipoprotein N-acyltransferase subfamily.

Its subcellular location is the cell inner membrane. It carries out the reaction N-terminal S-1,2-diacyl-sn-glyceryl-L-cysteinyl-[lipoprotein] + a glycerophospholipid = N-acyl-S-1,2-diacyl-sn-glyceryl-L-cysteinyl-[lipoprotein] + a 2-acyl-sn-glycero-3-phospholipid + H(+). It functions in the pathway protein modification; lipoprotein biosynthesis (N-acyl transfer). In terms of biological role, catalyzes the phospholipid dependent N-acylation of the N-terminal cysteine of apolipoprotein, the last step in lipoprotein maturation. The chain is Apolipoprotein N-acyltransferase from Bordetella bronchiseptica (strain ATCC BAA-588 / NCTC 13252 / RB50) (Alcaligenes bronchisepticus).